We begin with the raw amino-acid sequence, 76 residues long: Putative Fe(2+) transport protein A (76 aa).

Belongs to the FeoA family.

Functionally, might be involved in Fe(2+) ion uptake. This Helicobacter pylori (strain ATCC 700392 / 26695) (Campylobacter pylori) protein is Putative Fe(2+) transport protein A.